The sequence spans 395 residues: Nicotinamide/nicotinic acid mononucleotide adenylyltransferase 2 (395 aa).

Disordered stretches follow at residues 1-34 (MDPT…SGPI) and 62-102 (KKNA…NGID). The span at 9 to 24 (FKPPQPNEELQPPPDP) shows a compositional bias: pro residues. Phosphoserine is present on residues serine 85, serine 89, and serine 90. The NAD(+) site is built by serine 167 and phenylalanine 168. Residues histidine 175 and arginine 209 each contribute to the ATP site. NAD(+)-binding residues include threonine 247, glycine 282, aspartate 284, tryptophan 295, arginine 314, and asparagine 345. Position 350 to 353 (350 to 353 (TKVR)) interacts with ATP.

This sequence belongs to the eukaryotic NMN adenylyltransferase family. Co(2+) is required as a cofactor.

The protein localises to the nucleus. It catalyses the reaction beta-nicotinamide D-ribonucleotide + ATP + H(+) = diphosphate + NAD(+). The enzyme catalyses nicotinate beta-D-ribonucleotide + ATP + H(+) = deamido-NAD(+) + diphosphate. The protein operates within cofactor biosynthesis; NAD(+) biosynthesis; deamido-NAD(+) from nicotinate D-ribonucleotide: step 1/1. It participates in cofactor biosynthesis; NAD(+) biosynthesis; NAD(+) from nicotinamide D-ribonucleotide: step 1/1. Functionally, catalyzes the formation of NAD(+) from nicotinamide mononucleotide (NMN) and ATP. Can also use the deamidated form; nicotinic acid mononucleotide (NaMN) as substrate to form deamido-NAD(+) (NaAD). Key enzyme in both de novo and salvage pathways for NAD(+) biosynthesis. Predominantly acts in the salvage pathways via NMN. The protein is Nicotinamide/nicotinic acid mononucleotide adenylyltransferase 2 of Saccharomyces cerevisiae (strain ATCC 204508 / S288c) (Baker's yeast).